We begin with the raw amino-acid sequence, 1701 residues long: Coiled-coil domain-containing protein 180 (1701 aa).

A disordered region spans residues 1-35 (MRGGENRPPARVQSSSEELELRHQSLDAFPGRRLP). Residues 171–198 (QRQAEHKRKSYESALASFQEEIAQVGKE) adopt a coiled-coil conformation. Disordered stretches follow at residues 657–808 (EKPS…DKEE), 1272–1291 (HHCD…CGSR), and 1319–1354 (GFKR…KPNK). Positions 661–671 (QKRVKKLRKKQ) are enriched in basic residues. The span at 672-682 (GSKEDMTRSEE) shows a compositional bias: basic and acidic residues. The segment covering 683-692 (SISSGTSTAR) has biased composition (polar residues). Residues 696–705 (EVEEENDQEM) are compositionally biased toward acidic residues. Positions 755 to 766 (ENVKGQGEKKEE) are enriched in basic and acidic residues. Positions 757 to 804 (VKGQGEKKEESEEEDEKEEEEEEEKLEEEKEEKEAQEEQESLSVGEEE) form a coiled coil. Acidic residues predominate over residues 767–808 (SEEEDEKEEEEEEEKLEEEKEEKEAQEEQESLSVGEEEDKEE).

The polypeptide is Coiled-coil domain-containing protein 180 (CCDC180) (Homo sapiens (Human)).